We begin with the raw amino-acid sequence, 357 residues long: Neurogenic differentiation factor 1 (357 aa).

The disordered stretch occupies residues 1–94; the sequence is MTKSYSESGL…GPKKKKMTKA (94 aa). A compositionally biased stretch (acidic residues) spans 58–78; it reads EEEDEDEDLEEEEEEEEEEDD. Residues 81 to 93 show a composition bias toward basic residues; the sequence is PKRRGPKKKKMTK. The Nuclear localization signal signature appears at 87-93; the sequence is KKKKMTK. The bHLH domain maps to 101–153; the sequence is LRRMKANARERNRMHGLNAALDNLRKVVPCYSKTQKLSKIETLRLAKNYIWAL. Residues Ser162, Ser259, Ser266, and Ser274 each carry the phosphoserine modification. Residue Ser336 is modified to Phosphoserine; by CaMK2.

As to quaternary structure, efficient DNA-binding requires dimerization with another bHLH protein. Heterodimer with TCF3/E47; the heterodimer is inhibited in presence of ID2, but not NR0B2, to E-box element. Interacts with EP300; the interaction is inhibited by NR0B2. Interacts with RREB1. Interacts with ATOH8. Phosphorylated by MAPK1; phosphorylation regulates heterodimerization and DNA-binding activities. Phosphorylation on Ser-266 and Ser-274 increases transactivation on the insulin promoter in glucose-stimulated insulinoma cells. Phosphorylated. In islet cells, phosphorylated on Ser-274 upon glucose stimulation; which may be required for nuclear localization. In activated neurons, phosphorylated on Ser-336 by CaMK2; which promotes dendritic growth.

It localises to the cytoplasm. Its subcellular location is the nucleus. Acts as a transcriptional activator: mediates transcriptional activation by binding to E box-containing promoter consensus core sequences 5'-CANNTG-3'. Associates with the p300/CBP transcription coactivator complex to stimulate transcription of the secretin gene as well as the gene encoding the cyclin-dependent kinase inhibitor CDKN1A. Contributes to the regulation of several cell differentiation pathways, like those that promote the formation of early retinal ganglion cells, inner ear sensory neurons, granule cells forming either the cerebellum or the dentate gyrus cell layer of the hippocampus, endocrine islet cells of the pancreas and enteroendocrine cells of the small intestine. Together with PAX6 or SIX3, is required for the regulation of amacrine cell fate specification. Also required for dendrite morphogenesis and maintenance in the cerebellar cortex. Associates with chromatin to enhancer regulatory elements in genes encoding key transcriptional regulators of neurogenesis. The polypeptide is Neurogenic differentiation factor 1 (Neurod1) (Rattus norvegicus (Rat)).